Here is a 179-residue protein sequence, read N- to C-terminus: Protein TIFY 11a (179 aa).

The Tify domain occupies 62–97 (VDGGGQQFTIFYAGKVVVIDRCTPAMAAELMRFASA). Residues 115–140 (PIARKASLKRFLAKRKATPASARSSY) carry the Jas motif. Residues 117 to 124 (ARKASLKR) carry the Nuclear localization signal motif.

This sequence belongs to the TIFY/JAZ family. Interacts with BHLH148. Interacts with COI1A in a coronatine-dependent manner. Interacts with COI1B in a coronatine-dependent manner. Coronatine is an analog of jasmonoyl isoleucine (JA-Ile). Interacts with RSS3. Forms a ternary complex with RSS3 and BHLH094 in the nucleus. Interacts with BHLH062 and NINJA1. Interacts with MYB30. Post-translationally, ubiquitinated. Targeted for degradation by the SCF(COI1) E3 ubiquitin ligase-proteasome pathway during jasmonate signaling.

Its subcellular location is the nucleus. Functionally, repressor of jasmonate (JA) responses. Forms a ternary complex with RSS3 and BHLH94 to negatively regulate JA-responsive genes. Acts as a positive regulator of tolerance to salt stress. Involved in salt tolerance by modulating potassium homeostasis through JA signaling and regulation of the expression of potassium ion transporter genes. Acts as a transcriptional regulator targeted by the SCF(COI1) E3 ubiquitin ligase complexes in the JA signaling pathway, and interacts with BHLH062 that may directly regulate the ion transporter genes. Acts as a positive regulator of tolerance to dehydration stress. Acts as a negative regulator of tolerance to cold stress by interacting with MYB30. The polypeptide is Protein TIFY 11a (Oryza sativa subsp. japonica (Rice)).